Consider the following 124-residue polypeptide: MATINQLVRKSRSSKVVKSNVPALEACPQKRGVCTRVYTTTPKKPNSALRKVCRVRLTNGFEVSSYIGGEGHNLQEHSVILIRGGRVKDLPGVRYHTVRGALDCSGVKDRKQGRSKYGVKKPKA.

Residue aspartate 89 is modified to 3-methylthioaspartic acid.

Belongs to the universal ribosomal protein uS12 family. In terms of assembly, part of the 30S ribosomal subunit. Contacts proteins S8 and S17. May interact with IF1 in the 30S initiation complex.

Its function is as follows. With S4 and S5 plays an important role in translational accuracy. In terms of biological role, interacts with and stabilizes bases of the 16S rRNA that are involved in tRNA selection in the A site and with the mRNA backbone. Located at the interface of the 30S and 50S subunits, it traverses the body of the 30S subunit contacting proteins on the other side and probably holding the rRNA structure together. The combined cluster of proteins S8, S12 and S17 appears to hold together the shoulder and platform of the 30S subunit. The protein is Small ribosomal subunit protein uS12 of Proteus mirabilis (strain HI4320).